The primary structure comprises 257 residues: MIDLPRHPPSMLPVIRTVPEHAATGELKRRYDAVKSAFDVPWMGVVAMAHTQYPRFFDALWEGFEPIAGTRAFQDACRAMRAATEAGVERSLGISPLAHRLQDLGYDPREIGEIRTIIEVFSHGNYPYILLATVSRYLLSGGDLSGEPQVFETSPRSPHIFHQPILMEPHHADEHTRGIFADIQATLALPILNTDYRALARWPSYFHLAWAELRPLIRTPSHAALSQQLHEQAIAVLRTLPNPARLKGDMVTRGCGR.

The protein belongs to the HAD-like hydrolase superfamily. S-2-haloalkanoic acid dehalogenase family.

The catalysed reaction is an (R)-2-haloacid + H2O = a (2S)-2-hydroxycarboxylate + a halide anion + H(+). Its function is as follows. Catalyzes the hydrolytic dehalogenation of small (R)-2-haloalkanoic acids to yield the corresponding (S)-2-hydroxyalkanoic acids. Acts on acids of short chain lengths, C(2) to C(4), with inversion of configuration at C-2. The polypeptide is (R)-2-haloacid dehalogenase (dehI) (Rhizobium sp. (strain NHG3)).